The following is a 104-amino-acid chain: Large ribosomal subunit protein bL21 (104 aa).

It belongs to the bacterial ribosomal protein bL21 family. As to quaternary structure, part of the 50S ribosomal subunit. Contacts protein L20.

Functionally, this protein binds to 23S rRNA in the presence of protein L20. This is Large ribosomal subunit protein bL21 from Rhodopirellula baltica (strain DSM 10527 / NCIMB 13988 / SH1).